A 132-amino-acid polypeptide reads, in one-letter code: Actin-related protein 2/3 complex subunit 5A (132 aa).

Ala2 carries the N-acetylalanine modification.

The protein belongs to the ARPC5 family. In terms of assembly, component of the Arp2/3 complex composed of ARP2, ARP3, ARPC1/p41-ARC, ARPC2/p34-ARC, ARPC3/p21-ARC, ARPC4/p20-ARC and ARPC5/p16-ARC. As to expression, expressed at low levels in all tissues with a relatively highest expression in inflorescences.

The protein resides in the cytoplasm. The protein localises to the cytoskeleton. It localises to the cell projection. In terms of biological role, functions as a component of the Arp2/3 complex which is involved in regulation of actin polymerization and together with an activating nucleation-promoting factor (NPF) mediates the formation of branched actin networks. Arp2/3 complex plays a critical role in the control of cell morphogenesis via the modulation of cell polarity development. This Arabidopsis thaliana (Mouse-ear cress) protein is Actin-related protein 2/3 complex subunit 5A (ARPC5A).